Here is a 1183-residue protein sequence, read N- to C-terminus: Formin-like protein (1183 aa).

Disordered regions lie at residues 1-44 (MGAV…SISS) and 63-82 (QHVRQPSLRSRSQQPMPTTD). A compositionally biased stretch (basic residues) spans 23–36 (PHSHAHHHSMRNGH). The segment covering 63–79 (QHVRQPSLRSRSQQPMP) has biased composition (polar residues). In terms of domain architecture, GBD/FH3 spans 76–559 (QPMPTTDELD…HNEQELKKRD (484 aa)). A Phosphoserine modification is found at Ser225. The span at 572–584 (LSRSLPRSASSGD) shows a compositional bias: polar residues. The segment at 572–681 (LSRSLPRSAS…PPVAGFMPAP (110 aa)) is disordered. Composition is skewed to pro residues over residues 605-614 (LPPPPPPMPA) and 622-640 (APPPPPPPAPPAPPPPPGF). The segment covering 641–654 (SPLGSPSGSLASTA) has biased composition (low complexity). Residues 687 to 1088 (IKRKVPTKYK…AALAASKKEN (402 aa)) enclose the FH2 domain. In terms of domain architecture, DAD spans 1136-1169 (DEVYNGALEDILLGLKSEPYRRADAVRRSQRRRI).

It belongs to the formin homology family. Self-associates. Interacts (via GBD/FH3 domain) with Cdc42; the interaction is stronger with the GTP bound form of Cdc42.

Functionally, together with Cdc42, involved in establishment of planar cell polarity in the developing compound eye by contributing to ommatidial rotation. Together with DAAM and Cdc42, has a role in neuronal development of mushroom bodies. The protein is Formin-like protein of Drosophila melanogaster (Fruit fly).